Consider the following 166-residue polypeptide: Small ribosomal subunit protein uS5 (166 aa).

The 64-residue stretch at 11–74 folds into the S5 DRBM domain; sequence LQEKLIAVNR…EKARRNMMNV (64 aa).

Belongs to the universal ribosomal protein uS5 family. Part of the 30S ribosomal subunit. Contacts proteins S4 and S8.

Its function is as follows. With S4 and S12 plays an important role in translational accuracy. Located at the back of the 30S subunit body where it stabilizes the conformation of the head with respect to the body. This chain is Small ribosomal subunit protein uS5, found in Pectobacterium atrosepticum (strain SCRI 1043 / ATCC BAA-672) (Erwinia carotovora subsp. atroseptica).